Consider the following 129-residue polypeptide: Protein FYV12 (129 aa).

N-linked (GlcNAc...) asparagine glycosylation is present at asparagine 91. The chain crosses the membrane as a helical span at residues 109-128 (LMTTFLLYVLYVCIYISAFI).

The protein localises to the membrane. Functionally, involved in K1 killer toxin resistance. The protein is Protein FYV12 (FYV12) of Saccharomyces cerevisiae (strain ATCC 204508 / S288c) (Baker's yeast).